A 432-amino-acid polypeptide reads, in one-letter code: Cyclic GMP-AMP synthase (432 aa).

110 to 115 contacts GTP; that stretch reads QGSFQY. Mg(2+) is bound by residues aspartate 129 and aspartate 131. Residue arginine 180 participates in ATP binding. Mg(2+) is bound at residue aspartate 191. Position 255 (serine 255) interacts with ATP. GTP-binding residues include lysine 283, serine 297, and aspartate 344. Glycine 432 is covalently cross-linked (Glycyl cysteine dithioester (Gly-Cys) (interchain with C-13 in Cap2)). A Glycyl cysteine dithioester (Gly-Cys) (interchain with C-493 in Cap2) cross-link involves residue glycine 432. Residue glycine 432 forms a Glycyl cysteine dithioester (Gly-Cys) (interchain with C-513 in Cap2) linkage. Glycine 432 participates in a covalent cross-link: Glycyl lysine isopeptide (Gly-Lys) (interchain with K-? in acceptor proteins).

This sequence belongs to the CD-NTase family. A02 subfamily. A Cap2 dimer is bound on either side by a DncV monomer. It depends on Mg(2+) as a cofactor. In terms of processing, in bacteria expressing capV-dncV-cap2-cap3, this protein is conjugated to about 130 cellular proteins by Cap2, most of which are involved in metabolism; more conjugated protein is found in the absence of Cap3. Most conjugation occurs via an isopeptide bond with the epsilon-amine of Lys on the target protein, but Cys-conjugation also occurs, including to Cap2. Conjugation or deconjugation from cellular proteins does not change the DncV activity in vitro, but does so in vivo during infection. (Microbial infection) During phage T4 infection is conjugated to at least 2 T4 proteins (fibritin (wac) and dexA.2).

It catalyses the reaction GTP + ATP = 3',3'-cGAMP + 2 diphosphate. With respect to regulation, primed for activation by Cap2 which conjugates it to cellular proteins. cGAMP production is induced in phage T4 infected cells in a manner that requires Cap2 and Cap3, as well as a C-terminal Ala or Gly residue in this protein. Functionally, cyclic nucleotide synthase (second messenger synthase) of a CBASS antivirus system. CBASS (cyclic oligonucleotide-based antiphage signaling system) provides immunity against bacteriophages. The CD-NTase protein (DncV, this protein) synthesizes cyclic nucleotides in response to infection; these serve as specific second messenger signals. The signals activate a diverse range of effectors, leading to bacterial cell death and thus abortive phage infection. A type II-A(GA) CBASS system. In terms of biological role, catalyzes the synthesis of 3',3'-cyclic GMP-AMP (cGAMP) from GTP and ATP, a second messenger in cell signal transduction. Its product controls the activity of cGAMP-activated phospholipase CapV, a patatin-like lipase that is a direct cGAMP receptor encoded in the dncV operon. Its function is as follows. Protects E.coli against phage infection. When capV and dncV are introduced in E.coli MG1655 there is 1000-fold protection against phage P1; protection against other phage (T2, T4, T5, T6 and lambda-vir) requires the 2 subsequent genes (cap2 and cap3). In another paper the capV-dncV-cap2-cap3 operon gives 10(4)-10(5)-fold protection against phages lambda, T2, T4 and T6, about 1000-fold protection against P1 and 10-fold protection against T5. This Escherichia coli (strain TW11681) protein is Cyclic GMP-AMP synthase.